A 156-amino-acid chain; its full sequence is ATP synthase subunit b (156 aa).

A helical transmembrane segment spans residues 3–23 (INFTLLAQALAFAGLIWIIAT).

The protein belongs to the ATPase B chain family. F-type ATPases have 2 components, F(1) - the catalytic core - and F(0) - the membrane proton channel. F(1) has five subunits: alpha(3), beta(3), gamma(1), delta(1), epsilon(1). F(0) has three main subunits: a(1), b(2) and c(10-14). The alpha and beta chains form an alternating ring which encloses part of the gamma chain. F(1) is attached to F(0) by a central stalk formed by the gamma and epsilon chains, while a peripheral stalk is formed by the delta and b chains.

The protein resides in the cell inner membrane. F(1)F(0) ATP synthase produces ATP from ADP in the presence of a proton or sodium gradient. F-type ATPases consist of two structural domains, F(1) containing the extramembraneous catalytic core and F(0) containing the membrane proton channel, linked together by a central stalk and a peripheral stalk. During catalysis, ATP synthesis in the catalytic domain of F(1) is coupled via a rotary mechanism of the central stalk subunits to proton translocation. In terms of biological role, component of the F(0) channel, it forms part of the peripheral stalk, linking F(1) to F(0). The sequence is that of ATP synthase subunit b from Stenotrophomonas maltophilia (strain R551-3).